Here is a 118-residue protein sequence, read N- to C-terminus: Protein BEX4 (118 aa).

Residues 14-50 (VEKDKKNKKGGKASKQSEEESHHLEEVENKKPGGNVR) are disordered. Residues 28–44 (KQSEEESHHLEEVENKK) are compositionally biased toward basic and acidic residues. The interval 30–88 (SEEESHHLEEVENKKPGGNVRRKVRRLVPNFLWAIPNRHVDHSEGGEEVGRFVGQVMEA) is interaction with SIRT2. Positions 30 to 118 (SEEESHHLEE…DNHYDFCLIP (89 aa)) are interaction with alpha-tubulin. Cys-115 lines the Zn(2+) pocket.

It belongs to the BEX family. As to quaternary structure, interacts with alpha-tubulin. Interacts with SIRT2. In terms of processing, ubiquitinated and degraded by the proteasome.

The protein localises to the cytoplasm. It is found in the cytoskeleton. The protein resides in the spindle pole. It localises to the nucleus. In terms of biological role, may play a role in microtubule deacetylation by negatively regulating the SIRT2 deacetylase activity toward alpha-tubulin and thereby participate in the control of cell cycle progression and genomic stability. In absence of reductive stress, acts as a pseudosubstrate for the CRL2(FEM1B) complex: associates with FEM1B via zinc, thereby preventing association between FEM1B and its substrates. In Rattus norvegicus (Rat), this protein is Protein BEX4.